The following is a 334-amino-acid chain: Formamidase (334 aa).

The 247-residue stretch at 14-260 (FLVAAIQFPV…WEIVTGEIYP (247 aa)) folds into the CN hydrolase domain. Glu-60 acts as the Proton acceptor in catalysis. Residue Lys-133 is the Proton donor of the active site. Cys-166 acts as the Nucleophile in catalysis.

This sequence belongs to the carbon-nitrogen hydrolase superfamily. Aliphatic amidase family.

The catalysed reaction is formamide + H2O = formate + NH4(+). Is an aliphatic amidase with a restricted substrate specificity, as it only hydrolyzes formamide. This is Formamidase from Helicobacter pylori (strain P12).